The primary structure comprises 409 residues: Gamma-glutamyl phosphate reductase (409 aa).

The protein belongs to the gamma-glutamyl phosphate reductase family.

The protein resides in the cytoplasm. It carries out the reaction L-glutamate 5-semialdehyde + phosphate + NADP(+) = L-glutamyl 5-phosphate + NADPH + H(+). It functions in the pathway amino-acid biosynthesis; L-proline biosynthesis; L-glutamate 5-semialdehyde from L-glutamate: step 2/2. Catalyzes the NADPH-dependent reduction of L-glutamate 5-phosphate into L-glutamate 5-semialdehyde and phosphate. The product spontaneously undergoes cyclization to form 1-pyrroline-5-carboxylate. The polypeptide is Gamma-glutamyl phosphate reductase (Koribacter versatilis (strain Ellin345)).